A 273-amino-acid polypeptide reads, in one-letter code: Orotidine 5'-phosphate decarboxylase (273 aa).

Catalysis depends on Lys97, which acts as the Proton donor.

The protein belongs to the OMP decarboxylase family. Type 2 subfamily.

The enzyme catalyses orotidine 5'-phosphate + H(+) = UMP + CO2. It functions in the pathway pyrimidine metabolism; UMP biosynthesis via de novo pathway; UMP from orotate: step 2/2. This is Orotidine 5'-phosphate decarboxylase from Cellvibrio japonicus (strain Ueda107) (Pseudomonas fluorescens subsp. cellulosa).